Reading from the N-terminus, the 474-residue chain is ABHD16B (474 aa).

In terms of domain architecture, AB hydrolase-1 spans 175 to 295; the sequence is VICCEGNAGF…QSWKGLVVRT (121 aa). Residues serine 248, aspartate 323, and histidine 423 each act as charge relay system in the active site.

The protein belongs to the AB hydrolase superfamily. ABHD16 family. In terms of tissue distribution, expressed in most tissues, with highest expression found in the testes, skeletal muscle, and brown adipose tissue.

It catalyses the reaction a 1,2-diacyl-sn-glycero-3-phospho-L-serine + H2O = a 2-acyl-sn-glycero-3-phospho-L-serine + a fatty acid + H(+). The catalysed reaction is a 1-acylglycerol + H2O = glycerol + a fatty acid + H(+). It carries out the reaction 1-(9Z-octadecenoyl)-glycerol + H2O = glycerol + (9Z)-octadecenoate + H(+). Its function is as follows. Hydrolyzes the sn-1 position of glycerophospholipids with high specificity towards phosphatidylserine (PS), PS-PLA1 enzyme. Also hydrolyzes the acyl chain of glycerolipids with a preference for the monoacylglycerol (MAG) 1-acylglycerol, MAG lipase. Plays a regulatory role in cellular lipid homeostasis by modulating genes involved in neutral lipid degradation and in phospholipid synthesis and composition. This is ABHD16B from Mus musculus (Mouse).